The chain runs to 38 residues: Defensin (38 aa).

3 disulfides stabilise this stretch: C4–C26, C11–C34, and C15–C36.

Belongs to the invertebrate defensin family. Type 2 subfamily.

The protein localises to the secreted. Its function is as follows. Mediates the inducible antibacterial activity in larvae of A.cyanea. The polypeptide is Defensin (Aeshna cyanea (Southern hawker dragonfly)).